The primary structure comprises 343 residues: MDENKNKALSAALAQIEKQYGKGSIMRLGDSDVAKDIQVVSTGSLGLDIALGVGGLPRGRIIEIYGPESSGKTTLTLQAIAEMQKLGGTAAFIDAEHALDPQYAQKIGVNVQELLISQPDNGEQALEITDMLVRSGSVDVVVVDSVAALTPRAEIEGEMGEPQMGLQARLMSQALRKLTANIKRTNTMVIFINQIRMKIGVIFGNPETTTGGNALKFYASVRLDIRRTGSIKRGEEMVGNETRVKIVKNKVAPPFKQADFDILYGEGISRESEIIELGVLHKLIEKAGAWYSYNGEKIGQGKDNVRDYLKEHKSIAHEIEQKIRAAVGLAETDSRVVPPSSGE.

Residue 66-73 coordinates ATP; it reads GPESSGKT.

The protein belongs to the RecA family.

It is found in the cytoplasm. Its function is as follows. Can catalyze the hydrolysis of ATP in the presence of single-stranded DNA, the ATP-dependent uptake of single-stranded DNA by duplex DNA, and the ATP-dependent hybridization of homologous single-stranded DNAs. It interacts with LexA causing its activation and leading to its autocatalytic cleavage. The protein is Protein RecA of Nitrosomonas europaea (strain ATCC 19718 / CIP 103999 / KCTC 2705 / NBRC 14298).